Reading from the N-terminus, the 695-residue chain is MAALLASQSCCYGGETARVTKAIGFSSSLENHFTGEATQCYGSKSKRFRIEMRQSELPSKVGINGRSVKMVPASEVVKRKDGVNGSAGKGVNGASLVSSRNINGAASTLVKAPKKTTESYLPPPVEGVRVLPSDEGFSWADENYSSLQRSIDVWSFVISLRIRILFDNSKWAYVGGFTEEKQKSRRRETASWLRESVLQLGPTFIKLGQLSSTRSDLFPREFVDELSKLQDRVPAFSPEKAKRFIEAELGAPISVMYKEFEEQPIAAASLGQVHRAVLHNGEKVVVKVQRPGLKKLFDIDLRNLKLIAEYFQKSESFGTNDWVGIYEECALILYQEIDYINEAKNADRFRRDFRNINWVRVPLVYWDYSAMKVLTLEYVPGVKINNLDALAARGFNRSRIASRAIEAYLIQILKTGFFHADPHPGNLAIDVDESIIYYDFGMMGEIKTFTRKRLLDLFYSVYEKDAKKVMQNLIDLEALQPTGDLSSVRRSVQFFLDNLLSQSPDQQQTLAAIGEDLFAISQDQPFRFPSTFTFVIRAFSTLEGIGYILDPEFSFVKVAAPYAQELLDLKQRQRSGTQLVQEIRKQADDARSSTLSMPYRVQRIEEFVKELDSGDLKLRVRVLESERAARKATILQMATMYTVLGGTLLNIGVTFSNQGSQLVANGSFIGAGIFMLLVLRSMQRVNKLDKFEKMI.

In terms of domain architecture, Protein kinase spans 259-589 (EFEEQPIAAA…VQEIRKQADD (331 aa)). Residues 265–273 (IAAASLGQV) and Lys-287 contribute to the ATP site. Asp-421 (proton acceptor) is an active-site residue. The next 2 membrane-spanning stretches (helical) occupy residues 633–653 (TILQMATMYTVLGGTLLNIGV) and 659–679 (GSQLVANGSFIGAGIFMLLVL).

This sequence belongs to the protein kinase superfamily. ADCK protein kinase family. Mostly expressed in leaves and flowers, and, to a lower extent, in roots.

Its subcellular location is the plastid. The protein localises to the chloroplast thylakoid membrane. It localises to the chloroplast. The protein resides in the plastoglobule. The enzyme catalyses L-seryl-[protein] + ATP = O-phospho-L-seryl-[protein] + ADP + H(+). It carries out the reaction L-threonyl-[protein] + ATP = O-phospho-L-threonyl-[protein] + ADP + H(+). Functionally, involved in resistance to oxidative stress. Influences responses to reactive oxygen species (ROS) production. Regulates plastoglobules formation in thylakoids. Together with OSA1, regulates iron distribution within the chloroplast and mediates the oxidative stress response. Together with ABC1K8, influences chloroplast lipid synthesis/accumulation and modulates chloroplast membrane composition in response to stress. The polypeptide is Protein ACTIVITY OF BC1 COMPLEX KINASE 7, chloroplastic (Arabidopsis thaliana (Mouse-ear cress)).